We begin with the raw amino-acid sequence, 55 residues long: Cicadin (55 aa).

Positions 1 to 26 are enriched in basic and acidic residues; that stretch reads NEYHGFVDKANNENKRKKQQGRDDFV. The segment at 1-39 is disordered; it reads NEYHGFVDKANNENKRKKQQGRDDFVVKPNNFANRRRKD.

In terms of biological role, possesses antifungal activity against B.cinerea, M.arachidicola, F.oxysporum, R.solani and C.comatus. Its function is as follows. Suppresses the activity of HIV-1 reverse transcriptase and stimulates the proliferation of murine splenocytes. The protein is Cicadin of Cicada flammata.